A 61-amino-acid chain; its full sequence is UPF0337 protein LMOf2365_2190 (61 aa).

A disordered region spans residues 1–61 (MSEDKGMKDK…TGDAKKKLSE (61 aa)).

Belongs to the UPF0337 (CsbD) family.

The sequence is that of UPF0337 protein LMOf2365_2190 from Listeria monocytogenes serotype 4b (strain F2365).